The chain runs to 159 residues: 17 kDa surface antigen (159 aa).

The N-terminal stretch at 1-19 (MKIISKIIVILLAASMLQA) is a signal peptide. Residue Cys-20 is the site of N-palmitoyl cysteine attachment. The S-diacylglycerol cysteine moiety is linked to residue Cys-20.

This sequence belongs to the rickettsiale 17 kDa surface antigen family.

Its subcellular location is the cell outer membrane. The chain is 17 kDa surface antigen (omp) from Rickettsia bellii.